The primary structure comprises 159 residues: Disulfide bond formation protein B (159 aa).

Over 1–8 (MQANSRAF) the chain is Cytoplasmic. A helical transmembrane segment spans residues 9-25 (FLLIAVIAFGLVGYALY). Residues 26–43 (LQHVEGLQPCPLCVLQRF) are Periplasmic-facing. A disulfide bridge connects residues Cys35 and Cys38. Residues 44–57 (AFVGIGVFSLLAAL) form a helical membrane-spanning segment. Over 58–63 (SSATRL) the chain is Cytoplasmic. A helical membrane pass occupies residues 64–81 (LWHGLGMLSGLGGIFVAG). Residues 82-136 (YHVSLLLNPKASCGIDPIENWVNALPTAKWLPQVFESDGLCTAPLPPVLGVSIPL) lie on the Periplasmic side of the membrane. An intrachain disulfide couples Cys94 to Cys122. Residues 137 to 155 (WSLIWMVILALTLVVAMIR) form a helical membrane-spanning segment. The Cytoplasmic portion of the chain corresponds to 156–159 (RERR).

It belongs to the DsbB family.

The protein resides in the cell inner membrane. In terms of biological role, required for disulfide bond formation in some periplasmic proteins. Acts by oxidizing the DsbA protein. This is Disulfide bond formation protein B from Ralstonia nicotianae (strain ATCC BAA-1114 / GMI1000) (Ralstonia solanacearum).